Reading from the N-terminus, the 487-residue chain is Protein nucleotidyltransferase YdiU (487 aa).

ATP is bound by residues glycine 90, glycine 92, arginine 93, lysine 113, aspartate 125, glycine 126, arginine 176, and arginine 183. The active-site Proton acceptor is the aspartate 252. Mg(2+)-binding residues include asparagine 253 and aspartate 262. Aspartate 262 lines the ATP pocket.

It belongs to the SELO family. Mg(2+) is required as a cofactor. Requires Mn(2+) as cofactor.

It catalyses the reaction L-seryl-[protein] + ATP = 3-O-(5'-adenylyl)-L-seryl-[protein] + diphosphate. The catalysed reaction is L-threonyl-[protein] + ATP = 3-O-(5'-adenylyl)-L-threonyl-[protein] + diphosphate. The enzyme catalyses L-tyrosyl-[protein] + ATP = O-(5'-adenylyl)-L-tyrosyl-[protein] + diphosphate. It carries out the reaction L-histidyl-[protein] + UTP = N(tele)-(5'-uridylyl)-L-histidyl-[protein] + diphosphate. It catalyses the reaction L-seryl-[protein] + UTP = O-(5'-uridylyl)-L-seryl-[protein] + diphosphate. The catalysed reaction is L-tyrosyl-[protein] + UTP = O-(5'-uridylyl)-L-tyrosyl-[protein] + diphosphate. In terms of biological role, nucleotidyltransferase involved in the post-translational modification of proteins. It can catalyze the addition of adenosine monophosphate (AMP) or uridine monophosphate (UMP) to a protein, resulting in modifications known as AMPylation and UMPylation. This is Protein nucleotidyltransferase YdiU from Azotobacter vinelandii (strain DJ / ATCC BAA-1303).